Here is a 344-residue protein sequence, read N- to C-terminus: uncharacterized protein (344 aa).

Belongs to the MG414/MG415 family.

This is an uncharacterized protein from Mycoplasma pneumoniae (strain ATCC 29342 / M129 / Subtype 1) (Mycoplasmoides pneumoniae).